Here is a 142-residue protein sequence, read N- to C-terminus: Transcriptional regulator MraZ (142 aa).

SpoVT-AbrB domains follow at residues 5–51 (ASSL…PRPE) and 77–120 (AMDV…DKAT).

It belongs to the MraZ family. As to quaternary structure, forms oligomers.

Its subcellular location is the cytoplasm. The protein localises to the nucleoid. This is Transcriptional regulator MraZ from Acidovorax ebreus (strain TPSY) (Diaphorobacter sp. (strain TPSY)).